Here is a 738-residue protein sequence, read N- to C-terminus: Polyphosphate kinase (738 aa).

The disordered stretch occupies residues 1-48; that stretch reads MIGNDRWVTEIETGPVTEARPDTNAREPGDRTPAAPPAATPAATTDQL. Positions 19 to 30 are enriched in basic and acidic residues; it reads ARPDTNAREPGD. N91 serves as a coordination point for ATP. Mg(2+) contacts are provided by R427 and R457. The active-site Phosphohistidine intermediate is the H487. ATP contacts are provided by Y520, R620, and H648.

Belongs to the polyphosphate kinase 1 (PPK1) family. Mg(2+) serves as cofactor. Post-translationally, an intermediate of this reaction is the autophosphorylated ppk in which a phosphate is covalently linked to a histidine residue through a N-P bond.

The enzyme catalyses [phosphate](n) + ATP = [phosphate](n+1) + ADP. In terms of biological role, catalyzes the reversible transfer of the terminal phosphate of ATP to form a long-chain polyphosphate (polyP). This chain is Polyphosphate kinase, found in Mycobacterium marinum (strain ATCC BAA-535 / M).